Reading from the N-terminus, the 469-residue chain is ATP synthase subunit beta (469 aa).

155–162 contributes to the ATP binding site; sequence GGAGVGKT.

The protein belongs to the ATPase alpha/beta chains family. In terms of assembly, F-type ATPases have 2 components, CF(1) - the catalytic core - and CF(0) - the membrane proton channel. CF(1) has five subunits: alpha(3), beta(3), gamma(1), delta(1), epsilon(1). CF(0) has three main subunits: a(1), b(2) and c(9-12). The alpha and beta chains form an alternating ring which encloses part of the gamma chain. CF(1) is attached to CF(0) by a central stalk formed by the gamma and epsilon chains, while a peripheral stalk is formed by the delta and b chains.

The protein resides in the cell inner membrane. The catalysed reaction is ATP + H2O + 4 H(+)(in) = ADP + phosphate + 5 H(+)(out). Functionally, produces ATP from ADP in the presence of a proton gradient across the membrane. The catalytic sites are hosted primarily by the beta subunits. This is ATP synthase subunit beta from Syntrophobacter fumaroxidans (strain DSM 10017 / MPOB).